A 427-amino-acid chain; its full sequence is MLDIKLLRENPTLVQERLDARKAGEYAIQPILDLDIQQRTLEGDRSQLQARSNEIGKLIGQKIKGGADPKGEEIATLKAEGNEIKQKLADLEPQEKELKAQIYNLLLALPNLPDQSTPVGTNETENVEVRRWGEAHKPTNENILPHWEIGEQLGILEFARSVKVAQSRFVSLVGAGAALERALINFMLDQQIAAGYVEVMPPVLINSDSLTGTGQLPKFAEESFRCADDDLWLTPTAEVPVTNLYRYEILEAENLPIYHCAYTPCFRREAGSYGKDTRGLIRLHQFNKVELVKFVHPETSAAEHEKLVANAEAILQALKLPYRVLELCSGDLGFSAGKCYDLEVWLPSADTYREISSCSNFYDFQARRAGIRFKEAGKKGTQFVHTLNGSGLAIGRTMAAILENYQQPNGTVAVPEVLRPYLKRDFL.

236 to 238 (TAE) lines the L-serine pocket. 267 to 269 (RRE) serves as a coordination point for ATP. Residue Glu-290 participates in L-serine binding. 354-357 (EISS) contributes to the ATP binding site. Ser-390 contacts L-serine.

Belongs to the class-II aminoacyl-tRNA synthetase family. Type-1 seryl-tRNA synthetase subfamily. As to quaternary structure, homodimer. The tRNA molecule binds across the dimer.

The protein resides in the cytoplasm. It carries out the reaction tRNA(Ser) + L-serine + ATP = L-seryl-tRNA(Ser) + AMP + diphosphate + H(+). It catalyses the reaction tRNA(Sec) + L-serine + ATP = L-seryl-tRNA(Sec) + AMP + diphosphate + H(+). Its pathway is aminoacyl-tRNA biosynthesis; selenocysteinyl-tRNA(Sec) biosynthesis; L-seryl-tRNA(Sec) from L-serine and tRNA(Sec): step 1/1. Its function is as follows. Catalyzes the attachment of serine to tRNA(Ser). Is also able to aminoacylate tRNA(Sec) with serine, to form the misacylated tRNA L-seryl-tRNA(Sec), which will be further converted into selenocysteinyl-tRNA(Sec). This Picosynechococcus sp. (strain ATCC 27264 / PCC 7002 / PR-6) (Agmenellum quadruplicatum) protein is Serine--tRNA ligase.